The chain runs to 112 residues: uncharacterized protein (112 aa).

Residues isoleucine 82 to leucine 104 form a helical membrane-spanning segment.

The protein resides in the membrane. This is an uncharacterized protein from Pasteurella multocida (strain Pm70).